We begin with the raw amino-acid sequence, 34 residues long: Phospholipase A2 (34 aa).

The active site involves His-18. Asp-19 serves as a coordination point for Ca(2+).

It belongs to the phospholipase A2 family. Group I subfamily. D49 sub-subfamily. Ca(2+) serves as cofactor. Post-translationally, contains 7 disulfide bonds. As to expression, expressed by the venom gland.

The protein localises to the secreted. The catalysed reaction is a 1,2-diacyl-sn-glycero-3-phosphocholine + H2O = a 1-acyl-sn-glycero-3-phosphocholine + a fatty acid + H(+). Snake venom phospholipase A2 (PLA2) that strongly inhibits platelet aggregation and has a strong anticoagulant activity. PLA2 catalyzes the calcium-dependent hydrolysis of the 2-acyl groups in 3-sn-phosphoglycerides. This chain is Phospholipase A2, found in Pseudechis papuanus (Papuan black snake).